Consider the following 255-residue polypeptide: Syntaxin-23 (255 aa).

The tract at residues 1–31 (MSFQDLEAGRGRSLASSRNINGGGSRQDTTQ) is disordered. S2 carries the post-translational modification N-acetylserine. The span at 14–31 (LASSRNINGGGSRQDTTQ) shows a compositional bias: polar residues. Residues 184 to 246 (EAVIEEREQG…AQGKSHLVRH (63 aa)) form the t-SNARE coiled-coil homology domain.

Belongs to the syntaxin family. Part of the t-SNARE complex. Interacts with RGS1. In terms of tissue distribution, expressed at higher levels in leaves, flowers and stems than in roots.

Its subcellular location is the membrane. May function in the docking or fusion of transport vesicles with the prevacuolar membrane. The polypeptide is Syntaxin-23 (SYP23) (Arabidopsis thaliana (Mouse-ear cress)).